A 276-amino-acid polypeptide reads, in one-letter code: Mitochondrial outer membrane protein porin of 36 kDa (276 aa).

This sequence belongs to the eukaryotic mitochondrial porin (TC 1.B.8.1) family.

The protein localises to the mitochondrion outer membrane. In terms of biological role, forms a channel through the cell membrane that allows diffusion of small hydrophilic molecules. The channel adopts an open conformation at low or zero membrane potential and a closed conformation at potentials above 30-40 mV. The open state has a weak anion selectivity whereas the closed state is cation-selective. The chain is Mitochondrial outer membrane protein porin of 36 kDa from Solanum tuberosum (Potato).